We begin with the raw amino-acid sequence, 435 residues long: Gamma-glutamyl phosphate reductase (435 aa).

The protein belongs to the gamma-glutamyl phosphate reductase family.

It is found in the cytoplasm. It catalyses the reaction L-glutamate 5-semialdehyde + phosphate + NADP(+) = L-glutamyl 5-phosphate + NADPH + H(+). It functions in the pathway amino-acid biosynthesis; L-proline biosynthesis; L-glutamate 5-semialdehyde from L-glutamate: step 2/2. In terms of biological role, catalyzes the NADPH-dependent reduction of L-glutamate 5-phosphate into L-glutamate 5-semialdehyde and phosphate. The product spontaneously undergoes cyclization to form 1-pyrroline-5-carboxylate. The sequence is that of Gamma-glutamyl phosphate reductase from Nostoc punctiforme (strain ATCC 29133 / PCC 73102).